The chain runs to 93 residues: MGESDVRLTAWVHGRVQGVGFRWWTRSRALELGLTGYAANKPDGRVQVVAQGSRAACERLLDLLTGGNTPGHVDKVISDWGEPADAIAGFTER.

Residues 7 to 93 (RLTAWVHGRV…ADAIAGFTER (87 aa)) form the Acylphosphatase-like domain. Catalysis depends on residues arginine 22 and asparagine 40.

The protein belongs to the acylphosphatase family.

The catalysed reaction is an acyl phosphate + H2O = a carboxylate + phosphate + H(+). The polypeptide is Acylphosphatase (acyP) (Mycolicibacterium vanbaalenii (strain DSM 7251 / JCM 13017 / BCRC 16820 / KCTC 9966 / NRRL B-24157 / PYR-1) (Mycobacterium vanbaalenii)).